The chain runs to 232 residues: MSSFPNTVAEGRRSGKAPEKSTFSQTCSLLSQFLKEKRASADSTLGIGGKMEPKANTKALLGSLQNSDGALKLSASAMEFLPQLVENPCIKKSRSPGPESPQLTIFYAGKMLVFDAFPPEKATEVMEMATKLASNNSGTEESPPSLPVTTEKLAVSKMPQTNTSSETPKPGNQGVGSDMRYPRRASLLKFLEKRKERVNARGPYQMNNLKPEGSSSGGEPEDQCSKQFDLNF.

Residues 1 to 24 are disordered; sequence MSSFPNTVAEGRRSGKAPEKSTFS. Residues 10–19 are compositionally biased toward basic and acidic residues; it reads EGRRSGKAPE. A Tify domain is found at 96–131; it reads PGPESPQLTIFYAGKMLVFDAFPPEKATEVMEMATK. Composition is skewed to polar residues over residues 133-142 and 158-167; these read ASNNSGTEES and MPQTNTSSET. The segment at 133–232 is disordered; that stretch reads ASNNSGTEES…QCSKQFDLNF (100 aa). The Nuclear localization signal motif lies at 182–189; the sequence is PRRASLLK. Residues 183-205 carry the Jas motif; it reads RRASLLKFLEKRKERVNARGPYQ. Over residues 190-199 the composition is skewed to basic and acidic residues; it reads FLEKRKERVN.

This sequence belongs to the TIFY/JAZ family. As to quaternary structure, (Microbial infection) Interacts with the pathogenic Pseudomonas syringae HopZ1a protein; this interaction leads to its degradation. Post-translationally, ubiquitinated. Targeted for degradation by the SCF(COI1) E3 ubiquitin ligase-proteasome pathway during jasmonate signaling. (Microbial infection) Acetylated by Pseudomonas syringae HopZ1a. In terms of tissue distribution, mostly expressed in leaves and flowers and, to a lower extent, in grean pods and roots.

The protein resides in the nucleus. Its subcellular location is the cell membrane. Functionally, repressor of jasmonate responses. The polypeptide is Jasmonate ZIM domain-containing protein 1 (Glycine max (Soybean)).